A 329-amino-acid polypeptide reads, in one-letter code: GTPase Obg (329 aa).

The region spanning 1–159 is the Obg domain; that stretch reads MQFIDQAIID…WSLQLELKLL (159 aa). The OBG-type G domain maps to 160–328; sequence AEVGIIGLPN…LLSSIWNELG (169 aa). ATP contacts are provided by residues 166 to 173, 191 to 195, 213 to 216, 280 to 283, and 309 to 311; these read GLPNAGKS, FTTLI, DIPG, NKKE, and SAV. Mg(2+) is bound by residues S173 and T193.

It belongs to the TRAFAC class OBG-HflX-like GTPase superfamily. OBG GTPase family. Monomer. The cofactor is Mg(2+).

The protein resides in the cytoplasm. Its function is as follows. An essential GTPase which binds GTP, GDP and possibly (p)ppGpp with moderate affinity, with high nucleotide exchange rates and a fairly low GTP hydrolysis rate. Plays a role in control of the cell cycle, stress response, ribosome biogenesis and in those bacteria that undergo differentiation, in morphogenesis control. In Prochlorococcus marinus (strain NATL2A), this protein is GTPase Obg.